Reading from the N-terminus, the 614-residue chain is UvrABC system protein C (614 aa).

The GIY-YIG domain maps to 12 to 89 (DKPGVYLFRG…IKEHRPRYNV (78 aa)). A UVR domain is found at 198–233 (ADLVRGLARKMEAAAANLEFERAAELRDQLRAVEQV).

This sequence belongs to the UvrC family. In terms of assembly, interacts with UvrB in an incision complex.

Its subcellular location is the cytoplasm. The UvrABC repair system catalyzes the recognition and processing of DNA lesions. UvrC both incises the 5' and 3' sides of the lesion. The N-terminal half is responsible for the 3' incision and the C-terminal half is responsible for the 5' incision. This chain is UvrABC system protein C, found in Desulforudis audaxviator (strain MP104C).